A 336-amino-acid polypeptide reads, in one-letter code: G-protein coupled receptor homolog FPV027 (336 aa).

The Extracellular portion of the chain corresponds to 1-31 (MSMNNITSKMNQDSYGYFQLHMSDFTRVSLS). Asparagine 5 is a glycosylation site (N-linked (GlcNAc...) asparagine; by host). Residues 32–52 (IVFTLVFLVGIIGNAVIIWFI) form a helical membrane-spanning segment. Residues 53–63 (GFKWTKTISTL) lie on the Cytoplasmic side of the membrane. A helical transmembrane segment spans residues 64–84 (LFINLALADSLFLIFIPVYTV). The Extracellular portion of the chain corresponds to 85-101 (YVLSNFHWYLGEFLCRV). A disulfide bridge connects residues cysteine 99 and cysteine 178. The helical transmembrane segment at 102–122 (SSFFFTTNMYASMFLLTFISI) threads the bilayer. Residues 123–143 (DKYLTLTSHRLVYKYRKYRNY) are Cytoplasmic-facing. Residues 144-164 (YVCIGAIWCISIALGVPTLYY) form a helical membrane-spanning segment. Residues 165–200 (KRVILSSSRNETRCISYYGDDKHTAITIYRIIVCIR) lie on the Extracellular side of the membrane. N-linked (GlcNAc...) asparagine; by host glycosylation is present at asparagine 174. A helical transmembrane segment spans residues 201–221 (FIIGYVFPMTVILLSYALIVY). At 222–240 (KVKFINKPPNRSFMITTAS) the chain is on the cytoplasmic side. A helical transmembrane segment spans residues 241 to 261 (IFVFLACWTPHHVLNIISLYG). Over 262–276 (LKSTSMYNYIKESIP) the chain is Extracellular. A helical transmembrane segment spans residues 277-297 (FVNAIAFVYSAINPIIYIFVI). At 298–336 (RLTSTYDSDTMDELRSALLDEETTSTEDCSDIEISDISR) the chain is on the cytoplasmic side.

It belongs to the G-protein coupled receptor 1 family.

Its subcellular location is the host cell membrane. The chain is G-protein coupled receptor homolog FPV027 from Vertebrata (FPV).